Consider the following 312-residue polypeptide: MKNHTRQIEFILLGLTDNSQLQIVIFLFLLLNCVLSMIGNFTIIALILLDSQLKTPMYFFLRNFSFLEISFTTACIPRFLITIVTREKTISCNGCISQLFFYIFLGVTEFFLLAALSYDRYVAICKPLRYMSIMSNKVCYQLVFSSWVTGFLIIFTPLILGLNLDFCASNIIDHFICDISLILQLSCSDTHLLELIAFLLAVMTLIVTLFLVILSYSYIIKTILKFPSAQQKKKAFSTCSSHMIVVSITYGSCMFIYIKPSANERVALSKGVTVLNTSVAPLLNPFIYTLRNQQVKQAFKAVFRKIFSASDK.

Topologically, residues 1 to 22 are extracellular; the sequence is MKNHTRQIEFILLGLTDNSQLQ. An N-linked (GlcNAc...) asparagine glycan is attached at N3. Residues 23–43 traverse the membrane as a helical segment; that stretch reads IVIFLFLLLNCVLSMIGNFTI. Residues 44–63 lie on the Cytoplasmic side of the membrane; that stretch reads IALILLDSQLKTPMYFFLRN. Residues 64-84 form a helical membrane-spanning segment; the sequence is FSFLEISFTTACIPRFLITIV. Topologically, residues 85-95 are extracellular; that stretch reads TREKTISCNGC. Residues C95 and C177 are joined by a disulfide bond. Residues 96 to 116 form a helical membrane-spanning segment; it reads ISQLFFYIFLGVTEFFLLAAL. The Cytoplasmic segment spans residues 117–141; that stretch reads SYDRYVAICKPLRYMSIMSNKVCYQ. The chain crosses the membrane as a helical span at residues 142-162; sequence LVFSSWVTGFLIIFTPLILGL. Residues 163–194 lie on the Extracellular side of the membrane; it reads NLDFCASNIIDHFICDISLILQLSCSDTHLLE. Residues 195 to 215 traverse the membrane as a helical segment; sequence LIAFLLAVMTLIVTLFLVILS. Residues 216 to 237 lie on the Cytoplasmic side of the membrane; it reads YSYIIKTILKFPSAQQKKKAFS. The chain crosses the membrane as a helical span at residues 238-258; sequence TCSSHMIVVSITYGSCMFIYI. At 259-272 the chain is on the extracellular side; the sequence is KPSANERVALSKGV. A helical transmembrane segment spans residues 273-290; that stretch reads TVLNTSVAPLLNPFIYTL. Residues 291–312 lie on the Cytoplasmic side of the membrane; it reads RNQQVKQAFKAVFRKIFSASDK.

The protein belongs to the G-protein coupled receptor 1 family.

The protein localises to the cell membrane. Odorant receptor. This Homo sapiens (Human) protein is Olfactory receptor 6C70 (OR6C70).